The following is a 180-amino-acid chain: Guanosine-3',5'-bis(diphosphate) 3'-pyrophosphohydrolase MESH1 (180 aa).

An HD domain is found at 33–128 (YINHPIGVAR…VKLADKLYNL (96 aa)). 3 residues coordinate Mn(2+): histidine 36, histidine 62, and aspartate 63. Catalysis depends on nucleophile residues glutamate 66 and aspartate 67. Aspartate 123 lines the Mn(2+) pocket.

Belongs to the MESH1 family. The cofactor is Mn(2+).

The enzyme catalyses guanosine 3',5'-bis(diphosphate) + H2O = GDP + diphosphate + H(+). Functionally, ppGpp hydrolyzing enzyme involved in starvation response. This Danio rerio (Zebrafish) protein is Guanosine-3',5'-bis(diphosphate) 3'-pyrophosphohydrolase MESH1 (hddc3).